Here is a 369-residue protein sequence, read N- to C-terminus: Queuine tRNA-ribosyltransferase (369 aa).

Residue Asp89 is the Proton acceptor of the active site. Residues 89–93 (DSGGF), Asp142, Gln184, and Gly211 each bind substrate. Positions 242-248 (GGGSPEL) are RNA binding. The active-site Nucleophile is Asp261. An RNA binding; important for wobble base 34 recognition region spans residues 266 to 270 (TRIAR). Zn(2+) contacts are provided by Cys299, Cys301, Cys304, and His330.

The protein belongs to the queuine tRNA-ribosyltransferase family. Homodimer. Within each dimer, one monomer is responsible for RNA recognition and catalysis, while the other monomer binds to the replacement base PreQ1. The cofactor is Zn(2+).

It catalyses the reaction 7-aminomethyl-7-carbaguanine + guanosine(34) in tRNA = 7-aminomethyl-7-carbaguanosine(34) in tRNA + guanine. It functions in the pathway tRNA modification; tRNA-queuosine biosynthesis. Catalyzes the base-exchange of a guanine (G) residue with the queuine precursor 7-aminomethyl-7-deazaguanine (PreQ1) at position 34 (anticodon wobble position) in tRNAs with GU(N) anticodons (tRNA-Asp, -Asn, -His and -Tyr). Catalysis occurs through a double-displacement mechanism. The nucleophile active site attacks the C1' of nucleotide 34 to detach the guanine base from the RNA, forming a covalent enzyme-RNA intermediate. The proton acceptor active site deprotonates the incoming PreQ1, allowing a nucleophilic attack on the C1' of the ribose to form the product. After dissociation, two additional enzymatic reactions on the tRNA convert PreQ1 to queuine (Q), resulting in the hypermodified nucleoside queuosine (7-(((4,5-cis-dihydroxy-2-cyclopenten-1-yl)amino)methyl)-7-deazaguanosine). This Thermotoga neapolitana (strain ATCC 49049 / DSM 4359 / NBRC 107923 / NS-E) protein is Queuine tRNA-ribosyltransferase.